We begin with the raw amino-acid sequence, 951 residues long: Valine--tRNA ligase (951 aa).

The 'HIGH' region motif lies at 42 to 52 (PNVTGSLHMGH). The 'KMSKS' region signature appears at 554 to 558 (KMSKS). Lys557 provides a ligand contact to ATP. Residues 882–944 (LINKDDELAR…AEAKAKLIEQ (63 aa)) adopt a coiled-coil conformation.

The protein belongs to the class-I aminoacyl-tRNA synthetase family. ValS type 1 subfamily. Monomer.

The protein localises to the cytoplasm. The enzyme catalyses tRNA(Val) + L-valine + ATP = L-valyl-tRNA(Val) + AMP + diphosphate. In terms of biological role, catalyzes the attachment of valine to tRNA(Val). As ValRS can inadvertently accommodate and process structurally similar amino acids such as threonine, to avoid such errors, it has a 'posttransfer' editing activity that hydrolyzes mischarged Thr-tRNA(Val) in a tRNA-dependent manner. The chain is Valine--tRNA ligase from Salmonella choleraesuis (strain SC-B67).